The sequence spans 198 residues: Threonylcarbamoyl-AMP synthase (198 aa).

The 184-residue stretch at 15-198 (LLKIYHIIKL…AISGQLIRRG (184 aa)) folds into the YrdC-like domain.

The protein belongs to the SUA5 family. TsaC subfamily.

The protein resides in the cytoplasm. The catalysed reaction is L-threonine + hydrogencarbonate + ATP = L-threonylcarbamoyladenylate + diphosphate + H2O. Its function is as follows. Required for the formation of a threonylcarbamoyl group on adenosine at position 37 (t(6)A37) in tRNAs that read codons beginning with adenine. Catalyzes the conversion of L-threonine, HCO(3)(-)/CO(2) and ATP to give threonylcarbamoyl-AMP (TC-AMP) as the acyladenylate intermediate, with the release of diphosphate. This chain is Threonylcarbamoyl-AMP synthase, found in Baumannia cicadellinicola subsp. Homalodisca coagulata.